A 328-amino-acid chain; its full sequence is 3,4-dihydroxyphenylacetaldehyde synthase 2 (328 aa).

Asn-111 is an active-site residue. Position 222 is an N6-(pyridoxal phosphate)lysine (Lys-222).

This sequence belongs to the group II decarboxylase family. Requires pyridoxal 5'-phosphate as cofactor.

The enzyme catalyses L-dopa + O2 + H2O + H(+) = 3,4-dihydroxyphenylacetaldehyde + H2O2 + NH4(+) + CO2. In terms of biological role, catalyzes the decarboxylation-oxidative deamination of L-3,4-dihydroxyphenylalanine (L-DOPA) to 3,4-dihydroxylphenylacetaldehyde (DHPAA). Involved in cuticle development. Probably responsible for the protein cross-linking during the development of flexible cuticles. The sequence is that of 3,4-dihydroxyphenylacetaldehyde synthase 2 (amd) from Drosophila simulans (Fruit fly).